A 296-amino-acid chain; its full sequence is Glutamate 5-kinase (296 aa).

Lys15 lines the ATP pocket. Positions 55, 159, and 186 each coordinate substrate. ATP-binding positions include Ser206–Asp207 and Thr248–Lys254.

The protein belongs to the glutamate 5-kinase family.

The protein resides in the cytoplasm. It carries out the reaction L-glutamate + ATP = L-glutamyl 5-phosphate + ADP. It functions in the pathway amino-acid biosynthesis; L-proline biosynthesis; L-glutamate 5-semialdehyde from L-glutamate: step 1/2. Catalyzes the transfer of a phosphate group to glutamate to form L-glutamate 5-phosphate. This chain is Glutamate 5-kinase, found in Treponema pallidum (strain Nichols).